A 356-amino-acid polypeptide reads, in one-letter code: Glutamine synthetase PR-2 (356 aa).

One can recognise a GS beta-grasp domain in the interval 19 to 99 (IIAEYIWVGG…VICDVYTPAG (81 aa)). Positions 37–66 (ARTLPGPVDDPAKLPKWNYDGSSTDQAPGD) are disordered. One can recognise a GS catalytic domain in the interval 106–356 (KRYDAAKIFS…IAETTILWKP (251 aa)).

This sequence belongs to the glutamine synthetase family. Homooctamer. As to expression, roots.

It localises to the cytoplasm. The catalysed reaction is L-glutamate + NH4(+) + ATP = L-glutamine + ADP + phosphate + H(+). The protein is Glutamine synthetase PR-2 of Phaseolus vulgaris (Kidney bean).